A 331-amino-acid polypeptide reads, in one-letter code: Gem-associated protein 2 (331 aa).

Disordered regions lie at residues 1 to 23, 101 to 130, and 151 to 222; these read MDEF…NEPL, SNRP…LIPQ, and NNNN…TKKP. Acidic residues predominate over residues 11–21; that stretch reads VGEEIEPDDNE. Low complexity predominate over residues 106 to 126; the sequence is NNNNNNNNNNNNNNNNNNNNN. Positions 165-215 are enriched in acidic residues; sequence DNQEDDDDDENNEDYEYNENKEEEEEEEEEEEEEEEVEEEEEEEEEEEEVV. Residues 173–224 adopt a coiled-coil conformation; it reads DENNEDYEYNENKEEEEEEEEEEEEEEEVEEEEEEEEEEEEVVDYSTKKPTL.

It belongs to the gemin-2 family.

Its subcellular location is the nucleus. The protein localises to the gem. It localises to the cytoplasm. Its function is as follows. The SMN complex catalyzes the assembly of small nuclear ribonucleoproteins (snRNPs), the building blocks of the spliceosome, and thereby plays an important role in the splicing of cellular pre-mRNAs. Most spliceosomal snRNPs contain a common set of Sm proteins SNRPB, SNRPD1, SNRPD2, SNRPD3, SNRPE, SNRPF and SNRPG that assemble in a heptameric protein ring on the Sm site of the small nuclear RNA to form the core snRNP (Sm core). In the cytosol, the Sm proteins SNRPD1, SNRPD2, SNRPE, SNRPF and SNRPG (5Sm) are trapped in an inactive 6S pICln-Sm complex by the chaperone CLNS1A that controls the assembly of the core snRNP. To assemble core snRNPs, the SMN complex accepts the trapped 5Sm proteins from CLNS1A. Binding of snRNA inside 5Sm ultimately triggers eviction of the SMN complex, thereby allowing binding of SNRPD3 and SNRPB to complete assembly of the core snRNP. Within the SMN complex, GEMIN2 constrains the conformation of 5Sm, thereby promoting 5Sm binding to snRNA containing the snRNP code (a nonameric Sm site and a 3'-adjacent stem-loop), thus preventing progression of assembly until a cognate substrate is bound. In terms of biological role, may play an essential role in spliceosomal snRNP assembly in the cytoplasm and may be required for pre-mRNA splicing in the nucleus. This chain is Gem-associated protein 2 (gemin2), found in Dictyostelium discoideum (Social amoeba).